A 194-amino-acid polypeptide reads, in one-letter code: Protein GrpE (194 aa).

The segment at 1 to 53 (MVENEKTSVEETEEKAETEDEMLTEDPSNEDSDEANEEGNELSEEEKRIAELE) is disordered. Acidic residues predominate over residues 10–44 (EETEEKAETEDEMLTEDPSNEDSDEANEEGNELSE).

This sequence belongs to the GrpE family. Homodimer.

It localises to the cytoplasm. Its function is as follows. Participates actively in the response to hyperosmotic and heat shock by preventing the aggregation of stress-denatured proteins, in association with DnaK and GrpE. It is the nucleotide exchange factor for DnaK and may function as a thermosensor. Unfolded proteins bind initially to DnaJ; upon interaction with the DnaJ-bound protein, DnaK hydrolyzes its bound ATP, resulting in the formation of a stable complex. GrpE releases ADP from DnaK; ATP binding to DnaK triggers the release of the substrate protein, thus completing the reaction cycle. Several rounds of ATP-dependent interactions between DnaJ, DnaK and GrpE are required for fully efficient folding. The polypeptide is Protein GrpE (Halalkalibacterium halodurans (strain ATCC BAA-125 / DSM 18197 / FERM 7344 / JCM 9153 / C-125) (Bacillus halodurans)).